A 177-amino-acid polypeptide reads, in one-letter code: O-acetyl-ADP-ribose deacetylase (177 aa).

The Macro domain maps to 1 to 175; it reads MKSRIHVQHG…LYERLLTQQG (175 aa). Residues 11–12, asparagine 25, 33–35, and 122–126 contribute to the substrate site; these read DI, GVD, and STGAY. The active-site Proton acceptor is aspartate 35.

Belongs to the MacroD-type family. YmdB subfamily. As to quaternary structure, homodimer. Interacts with RNase III.

The catalysed reaction is 3''-O-acetyl-ADP-D-ribose + H2O = ADP-D-ribose + acetate + H(+). It carries out the reaction 2''-O-acetyl-ADP-D-ribose + H2O = ADP-D-ribose + acetate + H(+). Its function is as follows. Deacetylates O-acetyl-ADP ribose to yield ADP-ribose and free acetate. Down-regulates ribonuclease 3 (RNase III) activity. Acts by interacting directly with the region of the ribonuclease that is required for dimerization/activation. This is O-acetyl-ADP-ribose deacetylase from Citrobacter koseri (strain ATCC BAA-895 / CDC 4225-83 / SGSC4696).